The sequence spans 30 residues: Platelet factor 4 (30 aa).

Belongs to the intercrine alpha (chemokine CxC) family. Homotetramer. Interacts with TNFAIP6 (via Link domain). Interacts with CCR1. Interacts with CXCR3. In terms of processing, binds non-covalently to a proteoglycan molecule.

The protein resides in the secreted. Chemokine released during platelet aggregation that plays a role in different biological processes including hematopoiesis, cell proliferation, differentiation, and activation. Acts via different functional receptors including CCR1, CXCR3A or CXCR3B. Upon interaction with CXCR3A receptor, induces activated T-lymphocytes migration mediated via downstream Ras/extracellular signal-regulated kinase (ERK) signaling. Neutralizes the anticoagulant effect of heparin by binding more strongly to heparin than to the chondroitin-4-sulfate chains of the carrier molecule. Plays a role in the inhibition of hematopoiesis and in the maintenance of hematopoietic stem cell (HSC) quiescence. Chemotactic for neutrophils and monocytes via CCR1. Inhibits endothelial cell proliferation. In cooperation with toll-like receptor 8/TLR8, induces chromatin remodeling and activates inflammatory gene expression via the TBK1-IRF5 axis. In addition, induces myofibroblast differentiation and collagen synthesis in different precursor cells, including endothelial cells, by stimulating endothelial-to-mesenchymal transition. This is Platelet factor 4 (PF4) from Oryctolagus cuniculus (Rabbit).